The chain runs to 95 residues: MVTIRLRRMGKTKQPSYRLVVADSRAPRDGKFIEIVGHYNPVRQPKELHVKADRVRYWLSVGAQPSETVVRLLKQVGVLDADGKPTPTATTPVEG.

This sequence belongs to the bacterial ribosomal protein bS16 family.

This chain is Small ribosomal subunit protein bS16, found in Roseiflexus sp. (strain RS-1).